The following is a 231-amino-acid chain: MVGGVRIARARGPPIEPEELDDADGEALVRIARRAVEEWVEHGRRLDVEAGGKLGRPGAAFVTLERRSGDGWELRGCIGVVRPVLPLVEAVVTAAVDAASSDPRFEPLSREELDRVRVEVTVLGSMEPLPKKPHERPALVEVGLHGLYVEKPPYAGLLLPQVAVDEGWDPILFLTWACIKAGLPGTCWLREDVEIYRFRAAVWRETEPRGPVVRRDLAREAAAKGVNARVS.

The AMMECR1 domain occupies 29 to 214; sequence VRIARRAVEE…ETEPRGPVVR (186 aa).

This is Protein APE_1056.1 from Aeropyrum pernix (strain ATCC 700893 / DSM 11879 / JCM 9820 / NBRC 100138 / K1).